The following is a 333-amino-acid chain: Cytosolic Fe-S cluster assembly factor NBP35 (333 aa).

4 residues coordinate [4Fe-4S] cluster: cysteine 32, cysteine 46, cysteine 49, and cysteine 55. Position 85-92 (85-92 (GKGGVGKS)) interacts with ATP. 2 residues coordinate [4Fe-4S] cluster: cysteine 258 and cysteine 261.

This sequence belongs to the Mrp/NBP35 ATP-binding proteins family. NUBP1/NBP35 subfamily. As to quaternary structure, heterotetramer of 2 NBP35 and 2 CFD1 chains. Requires [4Fe-4S] cluster as cofactor.

It is found in the cytoplasm. It localises to the nucleus. Component of the cytosolic iron-sulfur (Fe/S) protein assembly (CIA) machinery. Required for maturation of extramitochondrial Fe-S proteins. The NBP35-CFD1 heterotetramer forms a Fe-S scaffold complex, mediating the de novo assembly of an Fe-S cluster and its transfer to target apoproteins. Required for biogenesis and export of both ribosomal subunits, which may reflect a role in assembly of the Fe/S clusters in RLI1, a protein which performs rRNA processing and ribosome export. The sequence is that of Cytosolic Fe-S cluster assembly factor NBP35 from Eremothecium gossypii (strain ATCC 10895 / CBS 109.51 / FGSC 9923 / NRRL Y-1056) (Yeast).